A 232-amino-acid polypeptide reads, in one-letter code: Ion-translocating oxidoreductase complex subunit E (232 aa).

The next 6 helical transmembrane spans lie at 18–38, 39–59, 69–89, 93–113, 127–147, and 182–202; these read GLVQ…ITNA, LGLG…VSLV, IPVF…LINA, GLYL…IIIG, AAFD…VLGA, and PFLL…LIAL.

This sequence belongs to the NqrDE/RnfAE family. As to quaternary structure, the complex is composed of six subunits: RnfA, RnfB, RnfC, RnfD, RnfE and RnfG.

It localises to the cell inner membrane. Part of a membrane-bound complex that couples electron transfer with translocation of ions across the membrane. The sequence is that of Ion-translocating oxidoreductase complex subunit E from Shewanella sp. (strain W3-18-1).